A 122-amino-acid polypeptide reads, in one-letter code: Large ribosomal subunit protein uL14 (122 aa).

It belongs to the universal ribosomal protein uL14 family. Part of the 50S ribosomal subunit. Forms a cluster with proteins L3 and L19. In the 70S ribosome, L14 and L19 interact and together make contacts with the 16S rRNA in bridges B5 and B8.

Its function is as follows. Binds to 23S rRNA. Forms part of two intersubunit bridges in the 70S ribosome. The protein is Large ribosomal subunit protein uL14 of Bifidobacterium animalis subsp. lactis (strain AD011).